Reading from the N-terminus, the 24-residue chain is Brevinin-1JDb (24 aa).

Cysteine 18 and cysteine 24 are joined by a disulfide.

As to expression, expressed by the skin glands.

The protein localises to the secreted. Its function is as follows. Has antibacterial activity against E.coli and S.aureus strains. Has antifungal activity against C.albicans. Has hemolytic activity against rabbit erythrocytes. The protein is Brevinin-1JDb of Odorrana jingdongensis (Jingdong frog).